A 117-amino-acid polypeptide reads, in one-letter code: UPF0102 protein Rsph17025_0472 (117 aa).

Belongs to the UPF0102 family.

This chain is UPF0102 protein Rsph17025_0472, found in Cereibacter sphaeroides (strain ATCC 17025 / ATH 2.4.3) (Rhodobacter sphaeroides).